We begin with the raw amino-acid sequence, 447 residues long: Elongation factor 1-alpha (447 aa).

The region spanning Lys5 to Ser230 is the tr-type G domain. The interval Gly14–Ser21 is G1. Gly14–Ser21 is a GTP binding site. The residue at position 55 (Lys55) is an N6,N6-dimethyllysine. Residues Gly70–Asp74 form a G2 region. An N6,N6,N6-trimethyllysine modification is found at Lys79. Positions Asp91–Gly94 are G3. Residues Asp91–His95 and Asn153–Asp156 each bind GTP. A G4 region spans residues Asn153 to Asp156. Position 187 is an N6,N6,N6-trimethyllysine (Lys187). The G5 stretch occupies residues Ser194 to Phe196. At Lys261 the chain carries N6-methyllysine. A 5-glutamyl glycerylphosphorylethanolamine modification is found at Glu289. N6,N6,N6-trimethyllysine is present on Lys306. The residue at position 362 (Glu362) is a 5-glutamyl glycerylphosphorylethanolamine. Lys396 bears the N6,N6,N6-trimethyllysine mark.

This sequence belongs to the TRAFAC class translation factor GTPase superfamily. Classic translation factor GTPase family. EF-Tu/EF-1A subfamily.

It is found in the cytoplasm. In terms of biological role, this protein promotes the GTP-dependent binding of aminoacyl-tRNA to the A-site of ribosomes during protein biosynthesis. This chain is Elongation factor 1-alpha, found in Vicia faba (Broad bean).